Consider the following 554-residue polypeptide: Hydroxylamine reductase (554 aa).

Residues cysteine 3, cysteine 6, cysteine 18, and cysteine 25 each contribute to the [2Fe-2S] cluster site. Histidine 252, glutamate 276, cysteine 320, cysteine 408, cysteine 436, cysteine 461, glutamate 495, and lysine 497 together coordinate hybrid [4Fe-2O-2S] cluster. Residue cysteine 408 is modified to Cysteine persulfide.

It belongs to the HCP family. The cofactor is [2Fe-2S] cluster. Hybrid [4Fe-2O-2S] cluster serves as cofactor.

The protein resides in the cytoplasm. The enzyme catalyses A + NH4(+) + H2O = hydroxylamine + AH2 + H(+). Catalyzes the reduction of hydroxylamine to form NH(3) and H(2)O. The sequence is that of Hydroxylamine reductase from Shewanella baltica (strain OS155 / ATCC BAA-1091).